A 254-amino-acid chain; its full sequence is Alcohol dehydrogenase (254 aa).

9-32 contributes to the NAD(+) binding site; the sequence is IFVAGLGGIGLDTSRELVKRDLKN. S138 contacts substrate. The active-site Proton acceptor is the Y151.

This sequence belongs to the short-chain dehydrogenases/reductases (SDR) family. In terms of assembly, homodimer.

The enzyme catalyses a primary alcohol + NAD(+) = an aldehyde + NADH + H(+). It carries out the reaction a secondary alcohol + NAD(+) = a ketone + NADH + H(+). In Drosophila paulistorum (Fruit fly), this protein is Alcohol dehydrogenase (Adh).